The following is a 569-amino-acid chain: Endonuclease/exonuclease/phosphatase family domain-containing protein 1 (569 aa).

Residues 1-20 (MGSTLGCHRSIPRDPSDLSH) are disordered. A lipid anchor (N-myristoyl glycine) is attached at glycine 2. Basic and acidic residues predominate over residues 11–20 (IPRDPSDLSH). A phosphoserine mark is found at serine 16, serine 21, and serine 25. A HhH domain is found at 38 to 67 (ERLNINTATEEELMTLPGVTRAVARSIVEY). Serine 106, serine 110, serine 160, and serine 173 each carry phosphoserine. The segment at 200-224 (SRPPSTHTNGGLTFTAKPHPSPTSL) is disordered. Residues 202 to 211 (PPSTHTNGGL) show a composition bias toward polar residues. Residue threonine 265 is modified to Phosphothreonine. The tract at residues 548–569 (EVPRNGNGVTLEPSEANVKHER) is disordered.

The protein is Endonuclease/exonuclease/phosphatase family domain-containing protein 1 (Eepd1) of Rattus norvegicus (Rat).